Reading from the N-terminus, the 178-residue chain is Probable DNA-directed RNA polymerase subunit delta (178 aa).

The HTH HARE-type domain occupies 14-81 (KSFIDMAYTL…GENLWGLRDW (68 aa)). The disordered stretch occupies residues 114–178 (LGDDDADEDD…AFEDAEDFND (65 aa)). The segment covering 116–178 (DDDADEDDDI…AFEDAEDFND (63 aa)) has biased composition (acidic residues).

It belongs to the RpoE family. As to quaternary structure, RNAP is composed of a core of 2 alpha, a beta and a beta' subunits. The core is associated with a delta subunit and one of several sigma factors.

Its function is as follows. Participates in both the initiation and recycling phases of transcription. In the presence of the delta subunit, RNAP displays an increased specificity of transcription, a decreased affinity for nucleic acids, and an increased efficiency of RNA synthesis because of enhanced recycling. In Staphylococcus epidermidis (strain ATCC 35984 / DSM 28319 / BCRC 17069 / CCUG 31568 / BM 3577 / RP62A), this protein is Probable DNA-directed RNA polymerase subunit delta.